The chain runs to 339 residues: NADPH dehydrogenase (339 aa).

Serine 24–cysteine 27 serves as a coordination point for FMN. A substrate-binding site is contributed by tyrosine 29. FMN is bound by residues alanine 61 and glutamine 103. Histidine 165–histidine 168 contributes to the substrate binding site. FMN contacts are provided by residues arginine 216 and alanine 308 to arginine 309.

The protein belongs to the NADH:flavin oxidoreductase/NADH oxidase family. NamA subfamily. In terms of assembly, homotetramer. FMN serves as cofactor.

The catalysed reaction is A + NADPH + H(+) = AH2 + NADP(+). Its function is as follows. Catalyzes the reduction of the double bond of an array of alpha,beta-unsaturated aldehydes and ketones. It also reduces the nitro group of nitroester and nitroaromatic compounds. It could have a role in detoxification processes. This chain is NADPH dehydrogenase, found in Bacillus licheniformis (strain ATCC 14580 / DSM 13 / JCM 2505 / CCUG 7422 / NBRC 12200 / NCIMB 9375 / NCTC 10341 / NRRL NRS-1264 / Gibson 46).